The primary structure comprises 165 residues: Sporulation thiol-disulfide oxidoreductase A (165 aa).

The signal sequence occupies residues 1–26; that stretch reads MLTKRLLTIYIMLLGLIAWFPGAAQA. The 139-residue stretch at 27 to 165 folds into the Thioredoxin domain; the sequence is EEKQPAVPAV…AEQLKEWTEE (139 aa). A disulfide bond links cysteine 65 and cysteine 68.

Belongs to the thioredoxin family.

It is found in the spore outer membrane. In terms of biological role, thiol-disulfide oxidoreductase with a reductive function, involved in spore cortex synthesis. It could be involved either in breaking disulfide bonds in cortex components or in proteins that are important for cortex synthesis, or in thiol/disulfide bond interchange. This chain is Sporulation thiol-disulfide oxidoreductase A (stoA), found in Bacillus subtilis (strain 168).